Reading from the N-terminus, the 82-residue chain is Exodeoxyribonuclease 7 small subunit (82 aa).

It belongs to the XseB family. In terms of assembly, heterooligomer composed of large and small subunits.

The protein localises to the cytoplasm. It catalyses the reaction Exonucleolytic cleavage in either 5'- to 3'- or 3'- to 5'-direction to yield nucleoside 5'-phosphates.. In terms of biological role, bidirectionally degrades single-stranded DNA into large acid-insoluble oligonucleotides, which are then degraded further into small acid-soluble oligonucleotides. The sequence is that of Exodeoxyribonuclease 7 small subunit from Pectobacterium atrosepticum (strain SCRI 1043 / ATCC BAA-672) (Erwinia carotovora subsp. atroseptica).